A 557-amino-acid polypeptide reads, in one-letter code: Potassium-transporting ATPase potassium-binding subunit (557 aa).

A run of 12 helical transmembrane segments spans residues 5-25, 63-83, 132-152, 170-190, 253-273, 283-303, 329-349, 356-376, 379-399, 416-436, 484-504, and 526-546; these read GFLL…PLGS, LCAI…MLLG, GLTV…FAFI, LLRI…LFFI, FVQM…FGEV, LLWA…WAEV, VLVS…AVIA, ALGG…FGGV, GLYG…LMIG, LTAL…ALAM, LLAF…MAIA, and LFVG…FIPA.

The protein belongs to the KdpA family. The system is composed of three essential subunits: KdpA, KdpB and KdpC.

The protein localises to the cell inner membrane. Part of the high-affinity ATP-driven potassium transport (or Kdp) system, which catalyzes the hydrolysis of ATP coupled with the electrogenic transport of potassium into the cytoplasm. This subunit binds the periplasmic potassium ions and delivers the ions to the membrane domain of KdpB through an intramembrane tunnel. In Shigella flexneri, this protein is Potassium-transporting ATPase potassium-binding subunit.